The sequence spans 346 residues: Calcium homeostasis modulator protein 1 (346 aa).

Over 1 to 21 (MMDKFRMIFQFLQSNQESFMN) the chain is Cytoplasmic. Residues 10 to 37 (QFLQSNQESFMNGICGIMALASAQMYSA) are central pore. The helical transmembrane segment at 22-37 (GICGIMALASAQMYSA) threads the bilayer. Topologically, residues 38 to 49 (FDFNCPCLPGYN) are extracellular. Intrachain disulfides connect C42/C127 and C44/C161. Residues 50-72 (AAYSAGILLAPPLVLFLLGLVMN) form a helical membrane-spanning segment. The phospholipid-binding stretch occupies residues 63–70 (VLFLLGLV). The Cytoplasmic portion of the chain corresponds to 73-99 (NNVSMLAEEWKRPLGRRAKDPAVLRYM). A helical transmembrane segment spans residues 100–125 (FCSMAQRALIAPVVWVAVTLLDGKCF). Residue C101 is the site of S-palmitoyl cysteine attachment. Positions 105-117 (QRALIAPVVWVAV) are phospholipid-binding. Residues 126 to 180 (LCAFCTAVPVSALGNGSLAPGLPAPELARLLARVPCPEIYDGDWLLAREVAVRYL) are Extracellular-facing. A glycan (N-linked (GlcNAc...) asparagine) is linked at N140. The helical transmembrane segment at 181-206 (RCISQALGWSFVLLTTLLAFVVRSVR) threads the bilayer. The segment at 192-202 (VLLTTLLAFVV) is phospholipid-binding. Residues 207–346 (PCFTQAAFLK…KEVATYFSKV (140 aa)) lie on the Cytoplasmic side of the membrane. Residue C208 is the site of S-palmitoyl cysteine attachment. The segment at 313-346 (LRLGQEEPPLMGNGWAGGGPRPPRKEVATYFSKV) is disordered.

It belongs to the CALHM family. As to quaternary structure, oligomerizes to form hexamers and octamers. Does not form gap junctions. Associates with CALHM3 as a pore-forming subunit in a hetero-hexameric channel complex. In terms of processing, N-glycosylated. Assembly with CALHM3 is associated with N-glycan remodeling and formation of hybrid complex- and high mannose-type glycochains. This N-glycan processing regulates channel trafficking and gating kinetics. Palmitoylated by ZDHHC3, ZDHHC20 and possibly ZDHHC7. Palmitoylation regulates voltage-dependent gating of the channel by shifting it toward more depolarized potentials. Predominantly expressed in adult brain. Detected also in retinoic acid-differentiated SH-SY5Y cells. Specifically expressed in circumvallate taste bud cells.

The protein resides in the cell membrane. The protein localises to the endoplasmic reticulum membrane. Its subcellular location is the basolateral cell membrane. The catalysed reaction is ATP(in) = ATP(out). It carries out the reaction Ca(2+)(in) = Ca(2+)(out). It catalyses the reaction Mg(2+)(in) = Mg(2+)(out). The enzyme catalyses Na(+)(in) = Na(+)(out). The catalysed reaction is K(+)(in) = K(+)(out). It carries out the reaction Li(+)(in) = Li(+)(out). It catalyses the reaction Rb(+)(in) = Rb(+)(out). The enzyme catalyses Cs(+)(in) = Cs(+)(out). The catalysed reaction is chloride(in) = chloride(out). Regulated by membrane voltage and extracellular Ca(2+). Inhibited by Gd(3+), ruthenium red, and Zn(2+) and partially inhibited by 2-aminoethoxydiphenyl borate. Functionally, pore-forming subunit of gustatory voltage-gated ion channels required for sensory perception of sweet, bitter and umami tastes. With CALHM3 forms a fast-activating voltage-gated ATP-release channel in type II taste bud cells, ATP acting as a neurotransmitter to activate afferent neural gustatory pathways. Acts both as a voltage-gated and calcium-activated ion channel: mediates neuronal excitability in response to membrane depolarization and low extracellular Ca(2+) concentration. Has poor ion selectivity and forms a wide pore (around 14 Angstroms) that mediates permeation of small ions including Ca(2+), Na(+), K(+) and Cl(-), as well as larger ions such as ATP(4-). Mediates Ca(2+) influx and downstream activation of the ERK1 and ERK2 cascade in neurons. Triggers endoplasmic reticulum stress by reducing the Ca(2+) content of the endoplasmic reticulum. May indirectly control amyloid precursor protein (APP) proteolysis and aggregated amyloid-beta (Abeta) peptides levels in a Ca(2+)-dependent manner. The sequence is that of Calcium homeostasis modulator protein 1 from Homo sapiens (Human).